Consider the following 140-residue polypeptide: uncharacterized protein (140 aa).

18–25 (GTNGSGKS) contributes to the ATP binding site.

This is an uncharacterized protein from Haemophilus influenzae (strain ATCC 51907 / DSM 11121 / KW20 / Rd).